A 194-amino-acid chain; its full sequence is Inosine triphosphate pyrophosphatase (194 aa).

8 to 13 (TGNANK) contacts ITP. Glutamate 47 lines the Mg(2+) pocket. Residues lysine 59, 75-76 (DT), lysine 92, 151-154 (FGWD), lysine 174, and 179-180 (HR) each bind ITP.

The protein belongs to the HAM1 NTPase family. In terms of assembly, homodimer. The cofactor is Mg(2+). Mn(2+) is required as a cofactor.

It is found in the cytoplasm. The protein resides in the nucleus. It catalyses the reaction ITP + H2O = IMP + diphosphate + H(+). The enzyme catalyses dITP + H2O = dIMP + diphosphate + H(+). It carries out the reaction XTP + H2O = XMP + diphosphate + H(+). Its function is as follows. Pyrophosphatase that hydrolyzes non-canonical purine nucleotides such as inosine triphosphate (ITP), deoxyinosine triphosphate (dITP) or xanthosine 5'-triphosphate (XTP) to their respective monophosphate derivatives. The enzyme does not distinguish between the deoxy- and ribose forms. Probably excludes non-canonical purines from RNA and DNA precursor pools, thus preventing their incorporation into RNA and DNA and avoiding chromosomal lesions. The polypeptide is Inosine triphosphate pyrophosphatase (Scheffersomyces stipitis (strain ATCC 58785 / CBS 6054 / NBRC 10063 / NRRL Y-11545) (Yeast)).